The chain runs to 197 residues: Protein GrpE (197 aa).

A disordered region spans residues 1-39 (MSSKEQKTPEGQAPEEIIMDQHEEIEAVEPEASAEQVDP).

The protein belongs to the GrpE family. As to quaternary structure, homodimer.

The protein resides in the cytoplasm. Its function is as follows. Participates actively in the response to hyperosmotic and heat shock by preventing the aggregation of stress-denatured proteins, in association with DnaK and GrpE. It is the nucleotide exchange factor for DnaK and may function as a thermosensor. Unfolded proteins bind initially to DnaJ; upon interaction with the DnaJ-bound protein, DnaK hydrolyzes its bound ATP, resulting in the formation of a stable complex. GrpE releases ADP from DnaK; ATP binding to DnaK triggers the release of the substrate protein, thus completing the reaction cycle. Several rounds of ATP-dependent interactions between DnaJ, DnaK and GrpE are required for fully efficient folding. The polypeptide is Protein GrpE (Escherichia coli O127:H6 (strain E2348/69 / EPEC)).